The sequence spans 290 residues: 6-carboxyhexanoate--CoA ligase (290 aa).

This sequence belongs to the BioW family. As to quaternary structure, homodimer. The cofactor is Mg(2+).

The enzyme catalyses heptanedioate + ATP + CoA = 6-carboxyhexanoyl-CoA + AMP + diphosphate. It participates in metabolic intermediate metabolism; pimeloyl-CoA biosynthesis; pimeloyl-CoA from pimelate: step 1/1. Its function is as follows. Catalyzes the transformation of pimelate into pimeloyl-CoA with concomitant hydrolysis of ATP to AMP. The polypeptide is 6-carboxyhexanoate--CoA ligase (Bacillus amyloliquefaciens (Bacillus velezensis)).